We begin with the raw amino-acid sequence, 309 residues long: ADP,ATP carrier protein 1 (309 aa).

Solcar repeat units follow at residues 11-104, 116-208, and 216-302; these read SHFG…IKSL, KWFA…FKPV, and GSFV…LQLI. The next 5 membrane-spanning stretches (helical) occupy residues 13–40, 81–105, 114–134, 184–205, and 219–239; these read FGVD…VKLL, TANV…KSLL, YAKW…LSLL, FVPS…YDSF, and VASF…SYPL. 2 residues coordinate ADP: arginine 86 and lysine 98. ADP is bound at residue arginine 243. Positions 243 to 248 are important for transport activity; the sequence is RRRMMM. The Nucleotide carrier signature motif motif lies at 243–248; sequence RRRMMM. A helical transmembrane segment spans residues 279–299; sequence CGANIFRGVAAAGVISLYDQL.

It belongs to the mitochondrial carrier (TC 2.A.29) family. In terms of assembly, monomer.

Its subcellular location is the mitochondrion inner membrane. The enzyme catalyses ADP(in) + ATP(out) = ADP(out) + ATP(in). Its activity is regulated as follows. The matrix-open state (m-state) is inhibited by the membrane-permeable bongkrekic acid (BKA). The cytoplasmic-open state (c-state) is inhibited by the membrane-impermeable toxic inhibitor carboxyatractyloside (CATR). Functionally, ADP:ATP antiporter that mediates import of ADP into the mitochondrial matrix for ATP synthesis, and export of ATP out to fuel the cell. Cycles between the cytoplasmic-open state (c-state) and the matrix-open state (m-state): operates by the alternating access mechanism with a single substrate-binding site intermittently exposed to either the cytosolic (c-state) or matrix (m-state) side of the inner mitochondrial membrane. This Saccharomyces cerevisiae (strain ATCC 204508 / S288c) (Baker's yeast) protein is ADP,ATP carrier protein 1 (AAC1).